We begin with the raw amino-acid sequence, 85 residues long: Hepcidin (85 aa).

The signal sequence occupies residues 1 to 22 (MALSTRIQAACLLLLLLASVAS). Residues 23–54 (VSVLPHQTGQLTDLRAQDTAGAEAGLQPTLQL) constitute a propeptide that is removed on maturation. Disulfide bonds link cysteine 67–cysteine 83, cysteine 70–cysteine 73, cysteine 71–cysteine 79, and cysteine 74–cysteine 82.

This sequence belongs to the hepcidin family. Interacts with SLC40A1; this interaction promotes SLC40A1 rapid ubiquitination.

The protein resides in the secreted. In terms of biological role, liver-produced hormone that constitutes the main circulating regulator of iron absorption and distribution across tissues. Acts by promoting endocytosis and degradation of ferroportin/SLC40A1, leading to the retention of iron in iron-exporting cells and decreased flow of iron into plasma. Controls the major flows of iron into plasma: absorption of dietary iron in the intestine, recycling of iron by macrophages, which phagocytose old erythrocytes and other cells, and mobilization of stored iron from hepatocytes. Has strong antimicrobial activity against E.coli ML35P N.cinerea and weaker against S.epidermidis, S.aureus and group b streptococcus bacteria. Active against the fungus C.albicans. No activity against P.aeruginosa. This chain is Hepcidin (HAMP), found in Canis lupus familiaris (Dog).